Consider the following 139-residue polypeptide: ATP synthase epsilon chain, chloroplastic (139 aa).

This sequence belongs to the ATPase epsilon chain family. F-type ATPases have 2 components, CF(1) - the catalytic core - and CF(0) - the membrane proton channel. CF(1) has five subunits: alpha(3), beta(3), gamma(1), delta(1), epsilon(1). CF(0) has three main subunits: a, b and c.

The protein resides in the plastid. Its subcellular location is the chloroplast thylakoid membrane. In terms of biological role, produces ATP from ADP in the presence of a proton gradient across the membrane. The chain is ATP synthase epsilon chain, chloroplastic from Dictyota dichotoma.